The primary structure comprises 130 residues: Small ribosomal subunit protein uS9 (130 aa).

Residues 108–130 (SREVERKKVGLRKARKRPQYSKR) form a disordered region. Basic residues predominate over residues 116-130 (VGLRKARKRPQYSKR).

The protein belongs to the universal ribosomal protein uS9 family.

This is Small ribosomal subunit protein uS9 from Cellvibrio japonicus (strain Ueda107) (Pseudomonas fluorescens subsp. cellulosa).